A 315-amino-acid polypeptide reads, in one-letter code: Methionyl-tRNA formyltransferase (315 aa).

107–110 (SLLP) contacts (6S)-5,6,7,8-tetrahydrofolate.

Belongs to the Fmt family.

It catalyses the reaction L-methionyl-tRNA(fMet) + (6R)-10-formyltetrahydrofolate = N-formyl-L-methionyl-tRNA(fMet) + (6S)-5,6,7,8-tetrahydrofolate + H(+). Its function is as follows. Attaches a formyl group to the free amino group of methionyl-tRNA(fMet). The formyl group appears to play a dual role in the initiator identity of N-formylmethionyl-tRNA by promoting its recognition by IF2 and preventing the misappropriation of this tRNA by the elongation apparatus. The sequence is that of Methionyl-tRNA formyltransferase from Borrelia garinii subsp. bavariensis (strain ATCC BAA-2496 / DSM 23469 / PBi) (Borreliella bavariensis).